We begin with the raw amino-acid sequence, 172 residues long: Cold-inducible RNA-binding protein (172 aa).

The region spanning 6–84 (GKLFVGGLSF…RQIRVDQAGK (79 aa)) is the RRM domain. The interval 69–172 (GKSVDGRQIR…SYDSYATHNE (104 aa)) is disordered. Composition is skewed to gly residues over residues 93-106 (YRGGSAGGRGFFRG) and 114-125 (FSRGGGDRGYGG). Residues S130, S138, S146, S156, S159, and S163 each carry the phosphoserine modification. Residues 138-172 (SRDYYSSRSQSGGYSDRSSGGSYRDSYDSYATHNE) show a composition bias toward low complexity.

Interacts with EIF4G1. Associates with ribosomes. Methylated on arginine residues. Methylation of the RGG motifs is a prerequisite for recruitment into SGs. Post-translationally, phosphorylated by CK2, GSK3A and GSK3B. Phosphorylation by GSK3B increases RNA-binding activity to the TXN 3'-UTR transcript upon exposure to UV radiation.

The protein resides in the nucleus. The protein localises to the nucleoplasm. Its subcellular location is the cytoplasm. In terms of biological role, cold-inducible mRNA binding protein that plays a protective role in the genotoxic stress response by stabilizing transcripts of genes involved in cell survival. Acts as a translational activator. Seems to play an essential role in cold-induced suppression of cell proliferation. Binds specifically to the 3'-untranslated regions (3'-UTRs) of stress-responsive transcripts RPA2 and TXN. Acts as a translational repressor. Promotes assembly of stress granules (SGs), when overexpressed. The polypeptide is Cold-inducible RNA-binding protein (CIRBP) (Pongo abelii (Sumatran orangutan)).